Consider the following 353-residue polypeptide: MSTTPTSAPETTQTDVLIVGAGPVGLFAAFQAGVLGLKCEIVDVLDRAGGQCTELYPEKPIYDIPAVPGCLAQDLVDRLLEQCAPFAFPMHFSQRAESVSDTTCTNGHPRLLVTTDAGKRFDVAAVLICAGAGAFAPQRVSLPEAAALEDRHLHYAVRDLSRFAGKRVIVAGGGDSALDWAMALRKTAARVTLLHRREGFRAADHTVKAMRDAVAAGEMDFVVGMLGGLQTNGDGALTGAVVKSRDGEQTIPADDLVALYGLVSEPGPIAQWDMDMRAGRIAVDTTTYESSRRGIFAAGDIAFYPNKQKLILSGFHEAALALRKAYHYAFPEKSLVHVHTSNNAALKERLTHG.

FAD is bound by residues D43, Q51, Y56, A96, F135, D300, and S341.

The protein belongs to the ferredoxin--NADP reductase type 2 family. As to quaternary structure, homodimer. FAD serves as cofactor.

The enzyme catalyses 2 reduced [2Fe-2S]-[ferredoxin] + NADP(+) + H(+) = 2 oxidized [2Fe-2S]-[ferredoxin] + NADPH. The sequence is that of Ferredoxin--NADP reductase 1 from Cupriavidus metallidurans (strain ATCC 43123 / DSM 2839 / NBRC 102507 / CH34) (Ralstonia metallidurans).